The chain runs to 1383 residues: MEARSRSAEELRRAELVEIIVETEAQTGVSGFNVAGGGKEGIFVRELREDSPAAKSLSLQEGDQLLSARVFFENFKYEDALRLLQCAEPYKVSFCLKRTVPTGDLALRPGTVSGYEMKGPRAKVAKLNIQSLSPVKKKKMVIGTLGTPADLAPVDVEFSFPKFSRLRRGLKADAVKGPVPAAPARRRLQLPRLRVREVAEEAQVARMAAAAPPSRKAKSEAEVATGAGFTAPQIELVGPRLPSAEVGVPKVSVPKGTPSTEAASGFALHLPTLGLGAPAAPAVEPPTTGIQVPQVELPTLPSLPTLPTLPCLDTQEGAAVVKVPTLDVAAPSVEVDLALPGAEVEAQGEVPEVALKMPRLSFPRFGVRGKEATEAKVVKGSPEAKAKGPRLRMPTFGLSLLESRPSGPEVAAESKLKLPTLKMPSFGISVAGPEVKAPKGPEVKLPKVPEIKLPKAPEAAIPDVQLPEVQLPKMSDMKLPKIPEMAVPDVHLPEVKLPKVPEMKVPEMKLPKIPEMAVPDVHLPDIQLPKVPEMKLPDMKLPKVPEMAVPDVHLPDIQLPKVPEMKLPDMKLPKVPEMAVPDVRIPEVQLPKVSEVKLPKIPDMAVPDVRLPELQLPKMSEVKLPKIPDMAVPDVRLPEVQLPKVSELKLPKVPEMTMPDIRLPEVQLPKVPDIKLPEIKLPKVPEMAVPDVPLPELQLPKVPQVPDVHLPKVPEMKLPKVPEAQRKSAGAEQAEKTEFSFKLPKMTVPKLGKVTKPGEAGIEVPDKLLILPCLQPEVGTEVARVGVPSLSLPSVELDLPGALGLEGQVQEAVSGKVEKPEGPRVAVGTGEAGFRVPSVEIVNPQLPTVEVKKEQLEMVEMKVKPTSKFSLPKFGLSGPKAVKAEVEGPGRATKLKVSKFAISLPRARAGTDADAKGAGEAGLLPALDLSIPQLSLDAQLPSGKVEVAGAESKPKGSRFALPKFGAKGRDSEADVLVAGEAELEGKGWGWDGKVKMPKLKMPSFGLSRGKEAEIQDGRVSPGEKLEAIAGQLKIPEVELVTPGAQETEKVTSGVKPSGLQVSTTRQVVAEGQEGAQRVSSLGISLPQVELASFGEAGPEIAAPSAEGTVGSRIQVPQVMLELPGTQVAGGDLLVGEGIFKMPTVTVPQLELDVGLGHEAQAGETAKSEGGLKLKLPTLGAGGKGEGAEAQSPEAQHTFHISLPDVELTSPVSSHAEYQVVEGDGDGGHKLKVRLPLFGLARAKEGIETGEKVKSPKLRLPRVGFSQSESASGEGSPSPEEEEEGSGEGASGRRGRVRVRLPRVGLASPSKGSKGQEGDAASKSPVGEKSPKFRFPRVSLSPKARSGSKDREEGGFRVRLPSVGFSETAAPGSARIEGTQAAAI.

Position 7 is a phosphoserine (S7). The 84-residue stretch at L16–T99 folds into the PDZ domain. The Nuclear export signal motif lies at V70 to L84. S133 and S243 each carry phosphoserine. Repeat copies occupy residues G432–K436, G440–K444, V448–K452, A456–A460, I461–Q465, L466–Q470, M474–K478, I482–A486, V487–H491, L492–K496, L497–P501, E502–P506, E507–P511, E515–P519, L523–Q527, V531–K535, L536–K540, V544–A548, V549–H553, L554–Q558, V562–K566, L567–K571, V575–A579, V580–R584, I585–Q589, V593–K597, I601–A605, V606–R610, L611–Q615, M619–K623, I627–A631, V632–R636, L637–Q641, V645–K649, V653–T657, M658–R662, L663–Q667, V671–K675, L676–K680, V684–A688, V689–P693, L694–Q698, L699–P703, V705–H709, V713–K717, and L718–P722. The segment at G432–P722 is 46 X 5 AA approximate tandem repeats of [LVMGIE]-[PSM]-[EDKA]-[LIVMA]-[AQKHPRT]; that may have a tripeptide spacer of [ALKD]-[IPV]-[KPH]. Phosphoserine occurs at positions 838, 971, 1020, 1271, 1275, 1277, 1285, 1323, and 1329. The interval K1251–I1383 is disordered. The segment covering S1267–S1277 has biased composition (low complexity). Residues G1346–F1355 are compositionally biased toward basic and acidic residues. Residue S1361 is modified to Phosphoserine.

Belongs to the periaxin family. In terms of assembly, homodimer (via PDZ domain). Interacts with SCN10A. Found in a complex with SCN10A. Interacts with DRP2. Identified in a dystroglycan complex that contains at least PRX, DRP2, UTRN, DMD and DAG1. Detected in a complex composed of at least EZR, AHNAK, PPL and PRX. Identified in a complex with EZR, AHNAK, BFSP1, BFSP2, ANK2, PLEC, VIM and spectrin. Post-translationally, the N-terminus is blocked. As to expression, detected in sciatic nerve and in trigeminal nerve Schwann cells. Detected in myelinating Schwann cells in sciatic nerve (at protein level).

The protein resides in the nucleus. It is found in the cytoplasm. It localises to the cell membrane. The protein localises to the cell junction. Functionally, scaffolding protein that functions as part of a dystroglycan complex in Schwann cells, and as part of EZR and AHNAK-containing complexes in eye lens fiber cells. Required for the maintenance of the peripheral myelin sheath that is essential for normal transmission of nerve impulses and normal perception of sensory stimuli. Required for normal transport of MBP mRNA from the perinuclear to the paranodal regions. Required for normal remyelination after nerve injury. Required for normal elongation of Schwann cells and normal length of the internodes between the nodes of Ranvier. The demyelinated nodes of Ranvier permit saltatory transmission of nerve impulses; shorter internodes cause slower transmission of nerve impulses. Required for the formation of appositions between the abaxonal surface of the myelin sheath and the Schwann cell plasma membrane; the Schwann cell cytoplasm is restricted to regions between these appositions. Required for the formation of Cajal bands and of Schmidt-Lanterman incisures that correspond to short, cytoplasm-filled regions on myelinated nerves. Recruits DRP2 to the Schwann cell plasma membrane. Required for normal protein composition of the eye lens fiber cell plasma membrane and normal eye lens fiber cell morphology. This Rattus norvegicus (Rat) protein is Periaxin (Prx).